Here is a 398-residue protein sequence, read N- to C-terminus: Tryptophan synthase beta chain (398 aa).

Residue Lys89 is modified to N6-(pyridoxal phosphate)lysine.

The protein belongs to the TrpB family. Tetramer of two alpha and two beta chains. The cofactor is pyridoxal 5'-phosphate.

It carries out the reaction (1S,2R)-1-C-(indol-3-yl)glycerol 3-phosphate + L-serine = D-glyceraldehyde 3-phosphate + L-tryptophan + H2O. It functions in the pathway amino-acid biosynthesis; L-tryptophan biosynthesis; L-tryptophan from chorismate: step 5/5. Its function is as follows. The beta subunit is responsible for the synthesis of L-tryptophan from indole and L-serine. The chain is Tryptophan synthase beta chain from Methanopyrus kandleri (strain AV19 / DSM 6324 / JCM 9639 / NBRC 100938).